We begin with the raw amino-acid sequence, 302 residues long: tRNA pseudouridine synthase B (302 aa).

Asp-47 functions as the Nucleophile in the catalytic mechanism.

The protein belongs to the pseudouridine synthase TruB family. Type 1 subfamily.

The enzyme catalyses uridine(55) in tRNA = pseudouridine(55) in tRNA. Responsible for synthesis of pseudouridine from uracil-55 in the psi GC loop of transfer RNAs. The sequence is that of tRNA pseudouridine synthase B from Ruegeria sp. (strain TM1040) (Silicibacter sp.).